The primary structure comprises 514 residues: 2,3-bisphosphoglycerate-independent phosphoglycerate mutase (514 aa).

Mn(2+) contacts are provided by Asp14 and Ser64. Catalysis depends on Ser64, which acts as the Phosphoserine intermediate. Substrate is bound by residues His125, 155 to 156, Arg187, Arg193, 263 to 266, and Lys336; these read RD and RADR. 5 residues coordinate Mn(2+): Asp403, His407, Asp444, His445, and His463.

This sequence belongs to the BPG-independent phosphoglycerate mutase family. In terms of assembly, monomer. Requires Mn(2+) as cofactor.

It catalyses the reaction (2R)-2-phosphoglycerate = (2R)-3-phosphoglycerate. Its pathway is carbohydrate degradation; glycolysis; pyruvate from D-glyceraldehyde 3-phosphate: step 3/5. Its function is as follows. Catalyzes the interconversion of 2-phosphoglycerate and 3-phosphoglycerate. This is 2,3-bisphosphoglycerate-independent phosphoglycerate mutase from Salmonella paratyphi B (strain ATCC BAA-1250 / SPB7).